A 218-amino-acid polypeptide reads, in one-letter code: Small ribosomal subunit protein uS3c (218 aa).

The 72-residue stretch at 47–118 (VQKNMRIFSG…KLNIAITRIG (72 aa)) folds into the KH type-2 domain.

This sequence belongs to the universal ribosomal protein uS3 family. In terms of assembly, part of the 30S ribosomal subunit.

Its subcellular location is the plastid. The protein resides in the chloroplast. This chain is Small ribosomal subunit protein uS3c (rps3), found in Cucumis sativus (Cucumber).